Reading from the N-terminus, the 627-residue chain is Altered inheritance of mitochondria protein 9, mitochondrial (627 aa).

Residues 1-43 (MIRYTVAGHSRRCVVGASKRVGAIKCITVAATKRFISNKSNEV) constitute a mitochondrion transit peptide.

This sequence belongs to the AIM9 family.

The protein localises to the mitochondrion. The chain is Altered inheritance of mitochondria protein 9, mitochondrial (AIM9) from Saccharomyces cerevisiae (strain JAY291) (Baker's yeast).